Reading from the N-terminus, the 160-residue chain is Small ribosomal subunit protein uS9 (160 aa).

Belongs to the universal ribosomal protein uS9 family.

The protein is Small ribosomal subunit protein uS9 of Mesorhizobium japonicum (strain LMG 29417 / CECT 9101 / MAFF 303099) (Mesorhizobium loti (strain MAFF 303099)).